The sequence spans 144 residues: uncharacterized protein (144 aa).

The next 2 membrane-spanning stretches (helical) occupy residues 76–96 (LLSA…VTML) and 105–125 (ILRA…VKSY).

The protein belongs to the RseC family.

It is found in the cell inner membrane. This is an uncharacterized protein from Haemophilus influenzae (strain ATCC 51907 / DSM 11121 / KW20 / Rd).